The primary structure comprises 1367 residues: Insulin-like growth factor 1 receptor (1367 aa).

An N-terminal signal peptide occupies residues 1 to 30 (MKSGSGGGSPTSLWGLLFLSAALSLWPTSG). An intrachain disulfide couples C33 to C52. 3 N-linked (GlcNAc...) asparagine glycosylation sites follow: N51, N102, and N135. 13 cysteine pairs are disulfide-bonded: C150–C178, C182–C205, C192–C211, C215–C224, C219–C230, C231–C239, C235–C248, C251–C260, C264–C276, C282–C303, C307–C321, C324–C328, and C332–C353. N244 carries an N-linked (GlcNAc...) asparagine glycan. N314 carries N-linked (GlcNAc...) asparagine glycosylation. 2 N-linked (GlcNAc...) asparagine glycosylation sites follow: N417 and N438. C455 and C488 are oxidised to a cystine. Fibronectin type-III domains are found at residues 491–609 (DVLH…TNAS), 610–708 (VPSI…TEAE), 735–828 (PERK…TMPA), and 834–927 (IPGP…VQAK). N-linked (GlcNAc...) asparagine glycosylation is found at N534, N607, N622, N640, N747, N756, N764, N900, and N913. Residues 741–935 (DVMQVANTTM…AKTGYENFIH (195 aa)) are Extracellular-facing. The helical transmembrane segment at 936–959 (LIIALPVAVLLIVGGLVIMLYVFH) threads the bilayer. At 960–1367 (RKRNNSRLGN…ALPLPQSSTC (408 aa)) the chain is on the cytoplasmic side. The IRS1- and SHC1-binding motif lies at 977 to 980 (NPEY). Y980 is subject to Phosphotyrosine. Residues 999–1274 (ITMSRELGQG…SIKEEMEPGF (276 aa)) form the Protein kinase domain. ATP contacts are provided by residues 1005–1013 (LGQGSFGMV) and K1033. D1135 acts as the Proton acceptor in catalysis. Phosphotyrosine; by autocatalysis is present on residues Y1161, Y1165, and Y1166. Glycyl lysine isopeptide (Lys-Gly) (interchain with G-Cter in ubiquitin) cross-links involve residues K1168 and K1171. S1278 carries the post-translational modification Phosphoserine; by GSK3-beta. S1282 carries the post-translational modification Phosphoserine. The interval 1288-1367 (PEPEELDLEP…ALPLPQSSTC (80 aa)) is disordered. A compositionally biased stretch (acidic residues) spans 1290–1299 (PEELDLEPEN). Positions 1300 to 1316 (MESVPLDPSASSSSLPL) are enriched in low complexity. Positions 1317–1326 (PDRHSGHKAE) are enriched in basic and acidic residues.

Belongs to the protein kinase superfamily. Tyr protein kinase family. Insulin receptor subfamily. As to quaternary structure, tetramer of 2 alpha and 2 beta chains linked by disulfide bonds. The alpha chains contribute to the formation of the ligand-binding domain, while the beta chain carries the kinase domain. Interacts with PIK3R1 and with the PTB/PID domains of IRS1 and SHC1 in vitro when autophosphorylated on tyrosine residues. Forms a hybrid receptor with INSR, the hybrid is a tetramer consisting of 1 alpha chain and 1 beta chain of INSR and 1 alpha chain and 1 beta chain of IGF1R. Interacts with ARRB1 and ARRB2. Interacts with GRB10. Interacts with RACK1. Interacts with SOCS1, SOCS2 and SOCS3. Interacts with 14-3-3 proteins. Interacts with NMD2. Interacts with MAP3K5. Interacts with STAT3. Found in a ternary complex with IGF1 and ITGAV:ITGB3 or ITGA6:ITGB4. Interacts (nascent precursor form) with ZFAND2B. In terms of assembly, (Microbial infection) Interacts with human respiratory syncytial virus (HRSV) fusion glycoprotein F1/F2 heterodimer. Autophosphorylated on tyrosine residues in response to ligand binding. Autophosphorylation occurs in trans, i.e. one subunit of the dimeric receptor phosphorylates tyrosine residues on the other subunit. Autophosphorylation occurs in a sequential manner; Tyr-1165 is predominantly phosphorylated first, followed by phosphorylation of Tyr-1161 and Tyr-1166. While every single phosphorylation increases kinase activity, all three tyrosine residues in the kinase activation loop (Tyr-1165, Tyr-1161 and Tyr-1166) have to be phosphorylated for optimal activity. Can be autophosphorylated at additional tyrosine residues (in vitro). Autophosphorylated is followed by phosphorylation of juxtamembrane tyrosines and C-terminal serines. May also be phosphorylated at Tyr-1161 and Tyr-1166 by mTORC2. Phosphorylation of Tyr-980 is required for IRS1- and SHC1-binding. Phosphorylation of Ser-1278 by GSK-3beta restrains kinase activity and promotes cell surface expression, it requires a priming phosphorylation at Ser-1282. Dephosphorylated by PTPN1. Post-translationally, polyubiquitinated at Lys-1168 and Lys-1171 through both 'Lys-48' and 'Lys-29' linkages, promoting receptor endocytosis and subsequent degradation by the proteasome. Ubiquitination is facilitated by pre-existing phosphorylation. In terms of processing, sumoylated with SUMO1. Controlled by regulated intramembrane proteolysis (RIP). Undergoes metalloprotease-dependent constitutive ectodomain shedding to produce a membrane-anchored 52 kDa C-Terminal fragment which is further processed by presenilin gamma-secretase to yield an intracellular 50 kDa fragment. As to expression, found as a hybrid receptor with INSR in muscle, heart, kidney, adipose tissue, skeletal muscle, hepatoma, fibroblasts, spleen and placenta (at protein level). Expressed in a variety of tissues. Overexpressed in tumors, including melanomas, cancers of the colon, pancreas prostate and kidney.

The protein resides in the cell membrane. It carries out the reaction L-tyrosyl-[protein] + ATP = O-phospho-L-tyrosyl-[protein] + ADP + H(+). With respect to regulation, activated by autophosphorylation at Tyr-1165, Tyr-1161 and Tyr-1166 on the kinase activation loop; phosphorylation at all three tyrosine residues is required for optimal kinase activity. Inhibited by MSC1609119A-1, BMS-754807, PQIP, benzimidazole pyridinone, isoquinolinedione, bis-azaindole, 3-cyanoquinoline, 2,4-bis-arylamino-1,3-pyrimidine, pyrrolopyrimidine, pyrrole-5-carboxaldehyde, picropodophyllin (PPP), tyrphostin derivatives. While most inhibitors bind to the ATP binding pocket, MSC1609119A-1 functions as allosteric inhibitor and binds close to the DFG motif and the activation loop. In terms of biological role, receptor tyrosine kinase which mediates actions of insulin-like growth factor 1 (IGF1). Binds IGF1 with high affinity and IGF2 and insulin (INS) with a lower affinity. The activated IGF1R is involved in cell growth and survival control. IGF1R is crucial for tumor transformation and survival of malignant cell. Ligand binding activates the receptor kinase, leading to receptor autophosphorylation, and tyrosines phosphorylation of multiple substrates, that function as signaling adapter proteins including, the insulin-receptor substrates (IRS1/2), Shc and 14-3-3 proteins. Phosphorylation of IRSs proteins lead to the activation of two main signaling pathways: the PI3K-AKT/PKB pathway and the Ras-MAPK pathway. The result of activating the MAPK pathway is increased cellular proliferation, whereas activating the PI3K pathway inhibits apoptosis and stimulates protein synthesis. Phosphorylated IRS1 can activate the 85 kDa regulatory subunit of PI3K (PIK3R1), leading to activation of several downstream substrates, including protein AKT/PKB. AKT phosphorylation, in turn, enhances protein synthesis through mTOR activation and triggers the antiapoptotic effects of IGFIR through phosphorylation and inactivation of BAD. In parallel to PI3K-driven signaling, recruitment of Grb2/SOS by phosphorylated IRS1 or Shc leads to recruitment of Ras and activation of the ras-MAPK pathway. In addition to these two main signaling pathways IGF1R signals also through the Janus kinase/signal transducer and activator of transcription pathway (JAK/STAT). Phosphorylation of JAK proteins can lead to phosphorylation/activation of signal transducers and activators of transcription (STAT) proteins. In particular activation of STAT3, may be essential for the transforming activity of IGF1R. The JAK/STAT pathway activates gene transcription and may be responsible for the transforming activity. JNK kinases can also be activated by the IGF1R. IGF1 exerts inhibiting activities on JNK activation via phosphorylation and inhibition of MAP3K5/ASK1, which is able to directly associate with the IGF1R. When present in a hybrid receptor with INSR, binds IGF1. PubMed:12138094 shows that hybrid receptors composed of IGF1R and INSR isoform Long are activated with a high affinity by IGF1, with low affinity by IGF2 and not significantly activated by insulin, and that hybrid receptors composed of IGF1R and INSR isoform Short are activated by IGF1, IGF2 and insulin. In contrast, PubMed:16831875 shows that hybrid receptors composed of IGF1R and INSR isoform Long and hybrid receptors composed of IGF1R and INSR isoform Short have similar binding characteristics, both bind IGF1 and have a low affinity for insulin. The sequence is that of Insulin-like growth factor 1 receptor (IGF1R) from Homo sapiens (Human).